Reading from the N-terminus, the 453-residue chain is Tubulin alpha-13 chain (453 aa).

Residue Gln-11 participates in GTP binding. Lys-40 carries the N6-acetyllysine modification. Residues Glu-71, Ser-140, Gly-144, Thr-145, Thr-179, Asn-206, and Asn-228 each contribute to the GTP site. Glu-71 contacts Mg(2+). Glu-254 is an active-site residue. The tract at residues 429-453 (EKDYEEVGTESQEGDGEEGEDGGDQ) is disordered. The span at 431-453 (DYEEVGTESQEGDGEEGEDGGDQ) shows a compositional bias: acidic residues.

This sequence belongs to the tubulin family. In terms of assembly, dimer of alpha and beta chains. A typical microtubule is a hollow water-filled tube with an outer diameter of 25 nm and an inner diameter of 15 nM. Alpha-beta heterodimers associate head-to-tail to form protofilaments running lengthwise along the microtubule wall with the beta-tubulin subunit facing the microtubule plus end conferring a structural polarity. Microtubules usually have 13 protofilaments but different protofilament numbers can be found in some organisms and specialized cells. It depends on Mg(2+) as a cofactor. Acetylation of alpha chains at Lys-40 stabilizes microtubules and affects affinity and processivity of microtubule motors. This modification has a role in multiple cellular functions, ranging from cell motility, cell cycle progression or cell differentiation to intracellular trafficking and signaling.

It is found in the cytoplasm. Its subcellular location is the cytoskeleton. It carries out the reaction GTP + H2O = GDP + phosphate + H(+). Functionally, tubulin is the major constituent of microtubules, a cylinder consisting of laterally associated linear protofilaments composed of alpha- and beta-tubulin heterodimers. Microtubules grow by the addition of GTP-tubulin dimers to the microtubule end, where a stabilizing cap forms. Below the cap, tubulin dimers are in GDP-bound state, owing to GTPase activity of alpha-tubulin. In Naegleria pringsheimi (Amoeba), this protein is Tubulin alpha-13 chain (TUBA13).